A 532-amino-acid chain; its full sequence is Apoptosis-inducing factor 1, mitochondrial (532 aa).

The transit peptide at 1 to 26 (MIRNLTKLTKFTIGNRFYQSSSKGRF) directs the protein to the mitochondrion. Residues 63–84 (STPSIDVKEKKSQPPKTKEDYQ) form a disordered region. Residues 98–440 (YVIIGGGTAA…APYTYQPFFW (343 aa)) form an FAD-dependent oxidoreductase region. Residues 102–106 (GGGTA), 128–129 (KE), R136, and K141 contribute to the FAD site. W160 provides a ligand contact to NAD(+). FAD-binding residues include V188 and R236. NAD(+) is bound by residues 260 to 263 (GGFL), E288, and G353. FAD is bound at residue D392. The short motif at 400 to 406 (SLGVRRR) is the Nuclear localization signal element. Residues 408–409 (EH), W440, and E450 contribute to the NAD(+) site. FAD-binding positions include 409–410 (HH) and W440.

Belongs to the FAD-dependent oxidoreductase family. The cofactor is FAD.

It localises to the mitochondrion. Its subcellular location is the cytoplasm. It is found in the nucleus. It catalyses the reaction A + NADH + H(+) = AH2 + NAD(+). Functionally, probable NADH oxidoreductase that acts as a caspase-independent mitochondrial effector of apoptotic cell death. The polypeptide is Apoptosis-inducing factor 1, mitochondrial (aif) (Dictyostelium discoideum (Social amoeba)).